The sequence spans 245 residues: Type III pantothenate kinase (245 aa).

6–13 (DQGNTILK) contacts ATP. Residues Tyr86 and 93-96 (GTDR) contribute to the substrate site. The active-site Proton acceptor is the Asp95. Asp116 provides a ligand contact to K(+). Thr119 serves as a coordination point for ATP. Thr171 contacts substrate.

This sequence belongs to the type III pantothenate kinase family. In terms of assembly, homodimer. It depends on NH4(+) as a cofactor. K(+) serves as cofactor.

It localises to the cytoplasm. The enzyme catalyses (R)-pantothenate + ATP = (R)-4'-phosphopantothenate + ADP + H(+). The protein operates within cofactor biosynthesis; coenzyme A biosynthesis; CoA from (R)-pantothenate: step 1/5. In terms of biological role, catalyzes the phosphorylation of pantothenate (Pan), the first step in CoA biosynthesis. In Azobacteroides pseudotrichonymphae genomovar. CFP2, this protein is Type III pantothenate kinase.